A 176-amino-acid chain; its full sequence is Nucleoside triphosphate/diphosphate phosphatase (176 aa).

Arginine 23 acts as the Proton donor in catalysis. Mg(2+) is bound by residues asparagine 87, aspartate 103, aspartate 105, aspartate 107, aspartate 120, and glutamate 123.

The protein belongs to the Ntdp family. Requires Mg(2+) as cofactor.

It carries out the reaction a ribonucleoside 5'-triphosphate + H2O = a ribonucleoside 5'-diphosphate + phosphate + H(+). The enzyme catalyses a ribonucleoside 5'-diphosphate + H2O = a ribonucleoside 5'-phosphate + phosphate + H(+). Functionally, has nucleoside phosphatase activity towards nucleoside triphosphates and nucleoside diphosphates. This Bacillus cytotoxicus (strain DSM 22905 / CIP 110041 / 391-98 / NVH 391-98) protein is Nucleoside triphosphate/diphosphate phosphatase.